Reading from the N-terminus, the 116-residue chain is Large ribosomal subunit protein bL17 (116 aa).

This sequence belongs to the bacterial ribosomal protein bL17 family. Part of the 50S ribosomal subunit. Contacts protein L32.

This Microcystis aeruginosa (strain NIES-843 / IAM M-2473) protein is Large ribosomal subunit protein bL17.